The sequence spans 97 residues: Large ribosomal subunit protein bL28 (97 aa).

The protein belongs to the bacterial ribosomal protein bL28 family.

This chain is Large ribosomal subunit protein bL28, found in Rickettsia prowazekii (strain Madrid E).